The primary structure comprises 200 residues: uncharacterized protein (200 aa).

A disordered region spans residues 1 to 21 (MSNSAQRDARNSRDESARASD). Residues 7–21 (RDARNSRDESARASD) are compositionally biased toward basic and acidic residues.

This is an uncharacterized protein from Mycobacterium tuberculosis (strain ATCC 25618 / H37Rv).